A 165-amino-acid chain; its full sequence is UI (165 aa).

Residues 1-18 (MKPVPLILLLATVLLSSH) form the signal peptide. At Val163 the chain carries Valine amide.

It belongs to the sauvagine/corticotropin-releasing factor/urotensin I family.

The protein resides in the secreted. Functionally, urotensin is found in the teleost caudal neurosecretory system. It has a suggested role in osmoregulation and as a corticotropin-releasing factor. The non-hormonal portion of this precursor may be a urotensin binding protein, urophysin. This is UI from Oncorhynchus mykiss (Rainbow trout).